The following is a 347-amino-acid chain: Quinolinate synthase (347 aa).

Positions 47 and 68 each coordinate iminosuccinate. Residue cysteine 113 participates in [4Fe-4S] cluster binding. Iminosuccinate is bound by residues 139–141 and serine 156; that span reads YAN. Residue cysteine 200 participates in [4Fe-4S] cluster binding. Residues 226-228 and threonine 243 each bind iminosuccinate; that span reads HPE. A [4Fe-4S] cluster-binding site is contributed by cysteine 297.

Belongs to the quinolinate synthase family. Type 1 subfamily. Requires [4Fe-4S] cluster as cofactor.

It is found in the cytoplasm. The catalysed reaction is iminosuccinate + dihydroxyacetone phosphate = quinolinate + phosphate + 2 H2O + H(+). The protein operates within cofactor biosynthesis; NAD(+) biosynthesis; quinolinate from iminoaspartate: step 1/1. Functionally, catalyzes the condensation of iminoaspartate with dihydroxyacetone phosphate to form quinolinate. This Salmonella agona (strain SL483) protein is Quinolinate synthase.